A 142-amino-acid chain; its full sequence is Protein lin-32 (142 aa).

The span at 30 to 48 (PLQSPNFSLDSPNYPDSLS) shows a compositional bias: polar residues. The disordered stretch occupies residues 30–66 (PLQSPNFSLDSPNYPDSLSNGGGKDDKKKCRRYKTPS). Positions 72-124 (MRRSAANERERRRMNTLNVAYDELREVLPEIDSGKKLSKFETLQMAQKYIECL) constitute a bHLH domain.

Forms a heterodimer with hlh-2. As to expression, expressed in PVD motor neurons.

The protein resides in the nucleus. Probable transcription factor which binds the E box motif 5'-CA[TC][AG]TG-3'. Essential for the specification of the neuroblast cell fate in the development of peripheral sense organs. Its role in the generation of sensory neurons may be through positively regulating the expression of the zinc finger protein ztf-11 during postdeirid neurogenesis. Required for specification of cell fate, acting in concert with lin-32, in the development of the male-specific genital sensilla (simple sense organs) known as rays. Involved in regulating glial specification, perhaps by suppressing a glial fate in different lineages during early embryogenesis. The protein is Protein lin-32 of Caenorhabditis elegans.